A 155-amino-acid chain; its full sequence is Transcriptional repressor NrdR (155 aa).

The segment at 3-34 (CPFCGNIDTQVKDSRPAEDHVSIRRRRFCPAC) is a zinc-finger region. Positions 49 to 139 (LVVIKSTGKR…VYKNFQAADD (91 aa)) constitute an ATP-cone domain.

The protein belongs to the NrdR family. It depends on Zn(2+) as a cofactor.

Negatively regulates transcription of bacterial ribonucleotide reductase nrd genes and operons by binding to NrdR-boxes. The polypeptide is Transcriptional repressor NrdR (Roseobacter denitrificans (strain ATCC 33942 / OCh 114) (Erythrobacter sp. (strain OCh 114))).